A 171-amino-acid chain; its full sequence is Putative antiporter subunit mnhG2 (171 aa).

The next 3 membrane-spanning stretches (helical) occupy residues 11-31 (IAAL…IGIV), 51-71 (VLLT…FFSV), and 72-92 (RLLL…HLVA). Residues 144-156 (DVQKQRQKEKQQE) show a composition bias toward basic and acidic residues. A disordered region spans residues 144-171 (DVQKQRQKEKQQEENIESLSEARRETKD).

Belongs to the CPA3 antiporters (TC 2.A.63) subunit G family. In terms of assembly, may form a heterooligomeric complex that consists of seven subunits: mnhA2, mnhB2, mnhC2, mnhD2, mnhE2, mnhF2 and mnhG2.

The protein resides in the cell membrane. The protein is Putative antiporter subunit mnhG2 (mnhG2) of Staphylococcus haemolyticus (strain JCSC1435).